We begin with the raw amino-acid sequence, 175 residues long: SsrA-binding protein (175 aa).

Disordered regions lie at residues 1 to 29 (MTRNPQPDRSKTAPKNAKRDPVASGERDA) and 152 to 175 (KRETDRRKTADRDAREAIARSRKS).

The protein belongs to the SmpB family.

It localises to the cytoplasm. Required for rescue of stalled ribosomes mediated by trans-translation. Binds to transfer-messenger RNA (tmRNA), required for stable association of tmRNA with ribosomes. tmRNA and SmpB together mimic tRNA shape, replacing the anticodon stem-loop with SmpB. tmRNA is encoded by the ssrA gene; the 2 termini fold to resemble tRNA(Ala) and it encodes a 'tag peptide', a short internal open reading frame. During trans-translation Ala-aminoacylated tmRNA acts like a tRNA, entering the A-site of stalled ribosomes, displacing the stalled mRNA. The ribosome then switches to translate the ORF on the tmRNA; the nascent peptide is terminated with the 'tag peptide' encoded by the tmRNA and targeted for degradation. The ribosome is freed to recommence translation, which seems to be the essential function of trans-translation. The chain is SsrA-binding protein from Koribacter versatilis (strain Ellin345).